The sequence spans 61 residues: Pleurocidin-like peptide WF3 (61 aa).

Residues 1–22 (MKFTATFLVLSLVVLMAEPGEC) form the signal peptide. Residues 48-61 (YDEQQELNKRAVDE) constitute a propeptide that is removed on maturation.

Belongs to the pleurocidin family.

Its subcellular location is the secreted. Its function is as follows. Antimicrobial peptide. In Pseudopleuronectes americanus (Winter flounder), this protein is Pleurocidin-like peptide WF3 (ple3).